The chain runs to 533 residues: Lysine--tRNA ligase (533 aa).

The 'HIGH' region signature appears at 28–36; that stretch reads PSGHIHIGN. The 'KMSKS' region motif lies at 278–282; it reads PMSSS.

It belongs to the class-I aminoacyl-tRNA synthetase family.

It is found in the cytoplasm. It catalyses the reaction tRNA(Lys) + L-lysine + ATP = L-lysyl-tRNA(Lys) + AMP + diphosphate. In Methanococcus maripaludis (strain DSM 14266 / JCM 13030 / NBRC 101832 / S2 / LL), this protein is Lysine--tRNA ligase (lysS).